The following is a 425-amino-acid chain: Ribosome biogenesis protein WDR12 homolog (425 aa).

A ubiquitin-like (UBL) domain region spans residues 7–93 (IQAKFFTKDE…ETIVHLEYLE (87 aa)). WD repeat units follow at residues 105–142 (IHDD…RRLT), 145–187 (GHLG…NAVE), 194–233 (GHAR…TDTD), 265–303 (GHHE…MKSQ), 305–344 (AGSK…GTIV), 350–390 (SHAG…APLY), and 394–425 (GHED…FEHK). The interval 227-253 (PDSTDTDHGQDGSEEGSRKKQKTVDGK) is disordered. Residues 231 to 253 (DTDHGQDGSEEGSRKKQKTVDGK) are compositionally biased toward basic and acidic residues.

The protein belongs to the WD repeat WDR12/YTM1 family.

It is found in the nucleus. It localises to the nucleolus. The protein resides in the nucleoplasm. Its function is as follows. Required for maturation of ribosomal RNAs and formation of the large ribosomal subunit. In Ixodes scapularis (Black-legged tick), this protein is Ribosome biogenesis protein WDR12 homolog.